The primary structure comprises 489 residues: Protein MGF 505-2R (489 aa).

The protein belongs to the asfivirus MGF 505 family.

Functionally, plays a role in virus cell tropism, and may be required for efficient virus replication in macrophages. The polypeptide is Protein MGF 505-2R (Ornithodoros (relapsing fever ticks)).